Consider the following 329-residue polypeptide: Gut-specific cysteine proteinase (329 aa).

A signal peptide spans 1-15 (MKFLILTALCAVTLA). Residues 16–84 (FVPINHQSAV…ATEQEVVLAS (69 aa)) constitute a propeptide, activation peptide. 6 disulfides stabilise this stretch: Cys98-Cys127, Cys110-Cys155, Cys146-Cys204, Cys147-Cys151, Cys183-Cys208, and Cys191-Cys196. The active site involves Cys113. Catalysis depends on residues His275 and Asn295.

This sequence belongs to the peptidase C1 family. As to expression, larvae exhibit strong expression in gut cells and weak expression in hypodermal cells. Adults exhibit the reverse: strong expression in hypodermal cells and weaker expression in gut cells.

Its function is as follows. Thiol protease. Has a role as a digestive enzyme. In Caenorhabditis elegans, this protein is Gut-specific cysteine proteinase (cpr-1).